A 315-amino-acid chain; its full sequence is Taste receptor type 2 member 3 (315 aa).

Residues 1–5 are Extracellular-facing; sequence MGLTD. The chain crosses the membrane as a helical span at residues 6 to 26; sequence GVFLIVCGAQFTLGILXNGFI. Topologically, residues 27-41 are cytoplasmic; that stretch reads GLVNGRSWFKTKRMS. Residues 42–62 form a helical membrane-spanning segment; the sequence is LSDFIIATLALSRIILLCIIL. At 63–93 the chain is on the extracellular side; that stretch reads TDSFLIVFSVKEHDSGIIMQLIDVFWTFTNH. A helical membrane pass occupies residues 94 to 114; it reads LSIWFATCLGVLYCLKIASFS. Topologically, residues 115–127 are cytoplasmic; sequence HPTFLWLKWRVSR. A helical transmembrane segment spans residues 128–148; the sequence is VMVWMLLGALLLSCGSTASLI. Residues 149–185 lie on the Extracellular side of the membrane; it reads NEFKLYSVLRGIEATRNVTEHFRKKRNEYYLIHVLGT. N-linked (GlcNAc...) asparagine glycosylation occurs at asparagine 165. Residues 186–206 form a helical membrane-spanning segment; it reads LWYLPPLVVSLASYFLLIFSL. Over 207–233 the chain is Cytoplasmic; sequence GRHTRQMLQNSTSSRDPSTEAHKRAIR. The helical transmembrane segment at 234–254 threads the bilayer; it reads IILSFFFLFLLYFLAFLIASF. Over 255–265 the chain is Extracellular; the sequence is GNFLPETKMAK. Residues 266–286 traverse the membrane as a helical segment; that stretch reads MIGEVMTMFYPAGHSFIVILG. Over 287 to 315 the chain is Cytoplasmic; it reads NSKLKQTFVEMLRCESGHLKPGSKGPIFS.

This sequence belongs to the G-protein coupled receptor T2R family.

The protein resides in the membrane. Its function is as follows. Gustducin-coupled receptor implicated in the perception of bitter compounds in the oral cavity and the gastrointestinal tract. Signals through PLCB2 and the calcium-regulated cation channel TRPM5. The sequence is that of Taste receptor type 2 member 3 (TAS2R3) from Papio hamadryas (Hamadryas baboon).